A 107-amino-acid chain; its full sequence is UPF0145 protein Sfri_2095 (107 aa).

It belongs to the UPF0145 family.

The polypeptide is UPF0145 protein Sfri_2095 (Shewanella frigidimarina (strain NCIMB 400)).